Here is a 160-residue protein sequence, read N- to C-terminus: Small ribosomal subunit protein uS7 (160 aa).

Belongs to the universal ribosomal protein uS7 family. Part of the 30S ribosomal subunit. Contacts proteins S9 and S11.

One of the primary rRNA binding proteins, it binds directly to 16S rRNA where it nucleates assembly of the head domain of the 30S subunit. Is located at the subunit interface close to the decoding center, probably blocks exit of the E-site tRNA. The sequence is that of Small ribosomal subunit protein uS7 from Ehrlichia canis (strain Jake).